Reading from the N-terminus, the 233-residue chain is Thrombin-like enzyme elegaxobin-2 (233 aa).

A Peptidase S1 domain is found at 1–224 (VIGGDECNIN…HLDWIKGIIA (224 aa)). 6 disulfides stabilise this stretch: C7-C138, C25-C41, C73-C231, C117-C185, C149-C164, and C175-C200. H40 (charge relay system) is an active-site residue. N78 carries N-linked (GlcNAc...) asparagine glycosylation. Residue D85 is the Charge relay system of the active site. The Charge relay system role is filled by S179.

It belongs to the peptidase S1 family. Snake venom subfamily. Monomer. In terms of tissue distribution, expressed by the venom gland.

Its subcellular location is the secreted. Thrombin-like snake venom serine protease that clots rabbit fibrinogen. Only the beta chain of fibrinogen (FGB) is cleaved, releasing fibrinopeptide B. Human and bovine fibrinogen are unaffected. Also cleaves Met-Lys and Arg-Ser bonds in heat-denatured bovine plasma kininogen to release Lys-bradykinin. This Protobothrops elegans (Elegant pitviper) protein is Thrombin-like enzyme elegaxobin-2.